Consider the following 273-residue polypeptide: MSEIVKFNPVMASGFGAYIDHRDFLEAKTETIKNLLMRQGFVVVKNLDIDSDTFRDIYSAYGTIVEYADEKIGVGFGYRDTLKLEGEKGKIVTGRGQLPFHADGGLLLSQVDQVFLYAAEIKNVKFRGATTVCDHALACQEMPAHLLRVLEEETFEVRVLERGYYVDVSPDGWFKVPVFTDLGWVRKMLIYFPFDEGQPASWEPRIVGFTDHETQAFFQELGAFLKQPRYYYKHFWEDGDLLIMDNRRVIHEREEFNDDDIVRRLYRGQTADI.

Positions 101 and 103 each coordinate Fe cation. Glycine 104 is a binding site for substrate. Position 130 (threonine 130) interacts with 2-oxoglutarate. Residue histidine 251 participates in Fe cation binding. 2-oxoglutarate-binding residues include arginine 253, arginine 263, and arginine 267.

This sequence belongs to the TfdA dioxygenase family. As to quaternary structure, homohexamer. Dimer of trimers. Requires Fe(2+) as cofactor.

The protein localises to the cytoplasm. The catalysed reaction is (3S,5S)-carbapenam-3-caboxylate + 2-oxoglutarate + O2 = (5R)-carbapenem-3-carboxylate + succinate + CO2 + H2O. Inhibited by L-N-acetylproline and by D-N-acetylproline. Its function is as follows. Catalyzes the Fe(2+) and alpha-ketoglutarate-dependent conversion of (3S,5S)-carbapenam to (5R)-carbapenem, an essential step in carbapenem antibiotic biosynthesis. This chain is (5R)-carbapenem-3-carboxylate synthase (carC), found in Pectobacterium carotovorum subsp. carotovorum (Erwinia carotovora subsp. carotovora).